Consider the following 375-residue polypeptide: DNA replication and repair protein RecF (375 aa).

30–37 (GKNAQGKT) is a binding site for ATP.

This sequence belongs to the RecF family.

The protein resides in the cytoplasm. In terms of biological role, the RecF protein is involved in DNA metabolism; it is required for DNA replication and normal SOS inducibility. RecF binds preferentially to single-stranded, linear DNA. It also seems to bind ATP. This Lactobacillus acidophilus (strain ATCC 700396 / NCK56 / N2 / NCFM) protein is DNA replication and repair protein RecF.